Reading from the N-terminus, the 517-residue chain is MSDAILGEQLAESSDFIAAIDQGTTSTRCMIFDHHGAEVARHQLEHEQILPRAGWVEHNPVEIWERTASVLISVLNATNLSPKDIAALGITNQRETTLVWNRHTGRPYYNAIVWQDTRTDRIASALDRDGRGNLIRRKAGLPPATYFSGGKLQWILENVDGVRAAAENGDALFGTPDTWVLWNLTGGPRGGVHVTDVTNASRTMLMDLETLDWDDELLSLFSIPRAMLPEIASSAPSEPYGVTLATGPVGGEVPITGVLGDQHAAMVGQVCLAPGEAKNTYGTGNFLLLNTGETIVRSNNGLLTTVCYQFGNAKPVYALEGSIAVTGSAVQWLRDQLGIISGAAQSEALARQVPDNGGMYFVPAFSGLFAPYWRSDARGAIVGLSRFNTNAHLARATLEAICYQSRDVVDAMEADSGVRLQVLKVDGGITGNDLCMQIQADVLGVDVVRPVVAETTALGVAYAAGLAVGFWAAPSDLRANWREDKRWTPTWDDDERAAGYAGWRKAVQRTLDWVDVS.

Thr24 contacts ADP. ATP contacts are provided by Thr24, Thr25, and Ser26. Thr24 lines the sn-glycerol 3-phosphate pocket. Residue Arg28 participates in ADP binding. The sn-glycerol 3-phosphate site is built by Arg94, Glu95, Tyr146, and Asp261. Positions 94, 95, 146, 261, and 262 each coordinate glycerol. ADP is bound by residues Thr283 and Gly327. Residues Thr283, Gly327, Gln331, and Gly428 each coordinate ATP. ADP is bound by residues Gly428 and Asn432.

Belongs to the FGGY kinase family.

It catalyses the reaction glycerol + ATP = sn-glycerol 3-phosphate + ADP + H(+). It functions in the pathway polyol metabolism; glycerol degradation via glycerol kinase pathway; sn-glycerol 3-phosphate from glycerol: step 1/1. With respect to regulation, inhibited by fructose 1,6-bisphosphate (FBP). Its function is as follows. Key enzyme in the regulation of glycerol uptake and metabolism. Catalyzes the phosphorylation of glycerol to yield sn-glycerol 3-phosphate. The polypeptide is Glycerol kinase (Mycobacterium tuberculosis (strain ATCC 25177 / H37Ra)).